A 233-amino-acid polypeptide reads, in one-letter code: Antilisterial bacteriocin subtilosin biosynthesis protein AlbG (233 aa).

Transmembrane regions (helical) follow at residues 7-27 (FTLL…VQAV), 46-66 (GLLA…LHYV), 116-136 (TYVM…FEIV), 145-165 (TPPA…LFCM), 176-198 (GSLF…MLSF), and 203-220 (LLFL…SFIY).

The protein localises to the cell membrane. In terms of biological role, involved in the production of the bacteriocin subtilosin. In Bacillus subtilis (strain 168), this protein is Antilisterial bacteriocin subtilosin biosynthesis protein AlbG (albG).